Here is an 878-residue protein sequence, read N- to C-terminus: Aconitate hydratase A (878 aa).

Cys426, Cys492, and Cys495 together coordinate [4Fe-4S] cluster.

This sequence belongs to the aconitase/IPM isomerase family. As to quaternary structure, monomer. [4Fe-4S] cluster serves as cofactor.

The enzyme catalyses citrate = D-threo-isocitrate. It carries out the reaction (2S,3R)-3-hydroxybutane-1,2,3-tricarboxylate = 2-methyl-cis-aconitate + H2O. Its pathway is carbohydrate metabolism; tricarboxylic acid cycle; isocitrate from oxaloacetate: step 2/2. It participates in organic acid metabolism; propanoate degradation. Functionally, involved in the catabolism of short chain fatty acids (SCFA) via the tricarboxylic acid (TCA)(acetyl degradation route) and probably the 2-methylcitrate cycle I (propionate degradation route). Catalyzes the reversible isomerization of citrate to isocitrate via cis-aconitate. Could catalyze the hydration of 2-methyl-cis-aconitate to yield (2R,3S)-2-methylisocitrate. The apo form of AcnA functions as a RNA-binding regulatory protein. The polypeptide is Aconitate hydratase A (acnA) (Rickettsia felis (strain ATCC VR-1525 / URRWXCal2) (Rickettsia azadi)).